The following is a 435-amino-acid chain: ATP-dependent protease ATPase subunit HslU (435 aa).

ATP is bound by residues I18, 60 to 65 (GVGKTE), D248, E313, and R385.

Belongs to the ClpX chaperone family. HslU subfamily. In terms of assembly, a double ring-shaped homohexamer of HslV is capped on each side by a ring-shaped HslU homohexamer. The assembly of the HslU/HslV complex is dependent on binding of ATP.

Its subcellular location is the cytoplasm. ATPase subunit of a proteasome-like degradation complex; this subunit has chaperone activity. The binding of ATP and its subsequent hydrolysis by HslU are essential for unfolding of protein substrates subsequently hydrolyzed by HslV. HslU recognizes the N-terminal part of its protein substrates and unfolds these before they are guided to HslV for hydrolysis. This is ATP-dependent protease ATPase subunit HslU from Roseobacter denitrificans (strain ATCC 33942 / OCh 114) (Erythrobacter sp. (strain OCh 114)).